The sequence spans 1043 residues: MAVSLPPTLGLSSAPDEIQHPHIKFSEWKFKLFRVRSFEKAPEKAQTEKQDSSEGKPSLEQSPAVLDKPGGQKSALPQPAFKPHPKFLKESHEDGKARDKAIHQANLRRLCRICGNSFNTTGHKRRYPVHGPVDGKTQVLLRKKEKRATSWPDLIAKVFRIDVKADVDSIHPTEFCHNCWSFMHRKFSSTPCEVYSPRNAAMEWHPHTLNCDICHIARRGLKRKSQQPNMQLSKKLKTVIDRARQARQRKRRAQARISSKELMKKIANCGQIHLSPKLLAVDFPAHFVKSISCQICEHILADPVETSCKHVFCRICILRCLKVMGSSCPSCHYPCFPTDLESPVKSFLSILNTLMVKCPAKECNEEISLEKYNHHISSHKESKETFVHINKGGRPRQHLLSLTRRAQKHRLRELKLQVKAFADKEEGGDVKSVCLTLFLLVLRARNEHRQADELEAIMRGQGSGLQPAVCLAIRVNTFLSCSQYHKMYRTVKAITGRQIFQPLHALRNAEKVLLPGYHPFEWQPPLKNVSSSTDVGIIDGLSGLSSSVDDYPVDTIAKRFRYDSALVSALMDMEEDILEGMRAQDLDDYLNGPFTVVVKESCDGMGDVSEKHGSGPVVPEKAVRFSFTVMKITIAHGSQNVKVFEEAKPNSELCCKPLCLMLADESDHETLTAILSPLIAEREAMKSSQLMLEMGGILRTFKFIFRGTGYDEKLVREVEGLEASGSVYICTLCDATRLEASQNLVFHSITRSHAENLERYEVWRSNPYHETVDELRDRVKGVSAKPFIETVPSIDALHCDIGNAAEFYKIFQLEIGEAYKNPHASKEERKRWQATLDKHLRKKMNLKPIMRMNGNFARKLMTKETVEAVCELIPSEERHEALRELMDLYLKMKPVWRSSCPAKECPESLCQYSFNSQRFAELLSTKFKYRYEGKITNYFHKTLAHVPEIIERDGSIGAWASEGNESGNKLFRRFRKMNARQSKYYEMEDVLKHHWLYTSKYLQKFMNAHKAFKNSGFTINLQRSSGDTLDLENSPESQDLMEF.

2 stretches are compositionally biased toward basic and acidic residues: residues 39 to 54 (EKAP…DSSE) and 87 to 98 (FLKESHEDGKAR). A disordered region spans residues 39-98 (EKAPEKAQTEKQDSSEGKPSLEQSPAVLDKPGGQKSALPQPAFKPHPKFLKESHEDGKAR). A Glycyl lysine isopeptide (Lys-Gly) (interchain with G-Cter in ubiquitin) cross-link involves residue K234. C269, H273, C293, C296, H298, C308, H310, C313, C316, C328, C331, C358, C363, H375, and H379 together coordinate Zn(2+). An RING-type zinc finger spans residues 293 to 332 (CQICEHILADPVETSCKHVFCRICILRCLKVMGSSCPSCH). The RAG1-type zinc-finger motif lies at 354 to 383 (LMVKCPAKECNEEISLEKYNHHISSHKESK). Residues 392-459 (GGRPRQHLLS…QADELEAIMR (68 aa)) constitute a DNA-binding region (NBD). Positions 603, 711, and 965 each coordinate a divalent metal cation.

This sequence belongs to the RAG1 family. As to quaternary structure, homodimer. Component of the RAG complex composed of core components RAG1 and RAG2, and associated component HMGB1 or HMGB2. Interacts with DCAF1, leading to recruitment of the CUL4A-RBX1-DDB1-DCAF1/VPRBP complex to ubiquitinate proteins and limit error-prone repair during V(D)J recombination. Requires Mg(2+) as cofactor. Mn(2+) is required as a cofactor. Autoubiquitinated in the presence of CDC34/UBCH3.

It localises to the nucleus. It catalyses the reaction S-ubiquitinyl-[E2 ubiquitin-conjugating enzyme]-L-cysteine + [acceptor protein]-L-lysine = [E2 ubiquitin-conjugating enzyme]-L-cysteine + N(6)-ubiquitinyl-[acceptor protein]-L-lysine.. In terms of biological role, catalytic component of the RAG complex, a multiprotein complex that mediates the DNA cleavage phase during V(D)J recombination. V(D)J recombination assembles a diverse repertoire of immunoglobulin and T-cell receptor genes in developing B and T-lymphocytes through rearrangement of different V (variable), in some cases D (diversity), and J (joining) gene segments. In the RAG complex, RAG1 mediates the DNA-binding to the conserved recombination signal sequences (RSS) and catalyzes the DNA cleavage activities by introducing a double-strand break between the RSS and the adjacent coding segment. RAG2 is not a catalytic component but is required for all known catalytic activities. DNA cleavage occurs in 2 steps: a first nick is introduced in the top strand immediately upstream of the heptamer, generating a 3'-hydroxyl group that can attack the phosphodiester bond on the opposite strand in a direct transesterification reaction, thereby creating 4 DNA ends: 2 hairpin coding ends and 2 blunt, 5'-phosphorylated ends. The chromatin structure plays an essential role in the V(D)J recombination reactions and the presence of histone H3 trimethylated at 'Lys-4' (H3K4me3) stimulates both the nicking and haipinning steps. The RAG complex also plays a role in pre-B cell allelic exclusion, a process leading to expression of a single immunoglobulin heavy chain allele to enforce clonality and monospecific recognition by the B-cell antigen receptor (BCR) expressed on individual B-lymphocytes. The introduction of DNA breaks by the RAG complex on one immunoglobulin allele induces ATM-dependent repositioning of the other allele to pericentromeric heterochromatin, preventing accessibility to the RAG complex and recombination of the second allele. In addition to its endonuclease activity, RAG1 also acts as an E3 ubiquitin-protein ligase that mediates monoubiquitination of histone H3. Histone H3 monoubiquitination is required for the joining step of V(D)J recombination. Mediates polyubiquitination of KPNA1. The polypeptide is V(D)J recombination-activating protein 1 (RAG1) (Sus scrofa (Pig)).